The chain runs to 553 residues: Glucose-6-phosphate isomerase (553 aa).

The active-site Proton donor is E357. Catalysis depends on residues H388 and K514. The tract at residues 524–553 (ITGAGSPPPQSDSSTDGLVRRYRTERGRAG) is disordered. A compositionally biased stretch (basic and acidic residues) spans 541–553 (LVRRYRTERGRAG).

This sequence belongs to the GPI family.

It is found in the cytoplasm. The enzyme catalyses alpha-D-glucose 6-phosphate = beta-D-fructose 6-phosphate. Its pathway is carbohydrate biosynthesis; gluconeogenesis. It functions in the pathway carbohydrate degradation; glycolysis; D-glyceraldehyde 3-phosphate and glycerone phosphate from D-glucose: step 2/4. Functionally, catalyzes the reversible isomerization of glucose-6-phosphate to fructose-6-phosphate. The protein is Glucose-6-phosphate isomerase of Mycobacterium bovis (strain BCG / Tokyo 172 / ATCC 35737 / TMC 1019).